Consider the following 162-residue polypeptide: RNA pyrophosphohydrolase (162 aa).

Residues 11–155 enclose the Nudix hydrolase domain; it reads PYRPCVGIVL…KRAVYEEVVA (145 aa). Positions 45 to 66 match the Nudix box motif; the sequence is GGIDEGEKPREAALRELWEETG.

It belongs to the Nudix hydrolase family. RppH subfamily. A divalent metal cation serves as cofactor.

Its function is as follows. Accelerates the degradation of transcripts by removing pyrophosphate from the 5'-end of triphosphorylated RNA, leading to a more labile monophosphorylated state that can stimulate subsequent ribonuclease cleavage. The polypeptide is RNA pyrophosphohydrolase (Cereibacter sphaeroides (strain ATCC 17023 / DSM 158 / JCM 6121 / CCUG 31486 / LMG 2827 / NBRC 12203 / NCIMB 8253 / ATH 2.4.1.) (Rhodobacter sphaeroides)).